Here is a 189-residue protein sequence, read N- to C-terminus: ATP synthase subunit b (189 aa).

The chain crosses the membrane as a helical span at residues 7–27 (LLIAALAVAPLAHAAEGGFVG).

This sequence belongs to the ATPase B chain family. F-type ATPases have 2 components, F(1) - the catalytic core - and F(0) - the membrane proton channel. F(1) has five subunits: alpha(3), beta(3), gamma(1), delta(1), epsilon(1). F(0) has three main subunits: a(1), b(2) and c(10-14). The alpha and beta chains form an alternating ring which encloses part of the gamma chain. F(1) is attached to F(0) by a central stalk formed by the gamma and epsilon chains, while a peripheral stalk is formed by the delta and b chains.

The protein resides in the cell inner membrane. Functionally, f(1)F(0) ATP synthase produces ATP from ADP in the presence of a proton or sodium gradient. F-type ATPases consist of two structural domains, F(1) containing the extramembraneous catalytic core and F(0) containing the membrane proton channel, linked together by a central stalk and a peripheral stalk. During catalysis, ATP synthesis in the catalytic domain of F(1) is coupled via a rotary mechanism of the central stalk subunits to proton translocation. Component of the F(0) channel, it forms part of the peripheral stalk, linking F(1) to F(0). This chain is ATP synthase subunit b, found in Hyphomonas neptunium (strain ATCC 15444).